Reading from the N-terminus, the 132-residue chain is Large ribosomal subunit protein uL14 (132 aa).

This sequence belongs to the universal ribosomal protein uL14 family. As to quaternary structure, part of the 50S ribosomal subunit. Forms a cluster with proteins L3 and L24e, part of which may contact the 16S rRNA in 2 intersubunit bridges.

In terms of biological role, binds to 23S rRNA. Forms part of two intersubunit bridges in the 70S ribosome. The sequence is that of Large ribosomal subunit protein uL14 from Methanocaldococcus jannaschii (strain ATCC 43067 / DSM 2661 / JAL-1 / JCM 10045 / NBRC 100440) (Methanococcus jannaschii).